A 104-amino-acid polypeptide reads, in one-letter code: NADH-quinone oxidoreductase subunit K (104 aa).

3 helical membrane-spanning segments follow: residues 4 to 24, 31 to 51, and 67 to 87; these read VPAS…LFGA, VIVL…FVAF, and LFTM…LIAL.

Belongs to the complex I subunit 4L family. NDH-1 is composed of 14 different subunits. Subunits NuoA, H, J, K, L, M, N constitute the membrane sector of the complex.

The protein resides in the cell membrane. The enzyme catalyses a quinone + NADH + 5 H(+)(in) = a quinol + NAD(+) + 4 H(+)(out). NDH-1 shuttles electrons from NADH, via FMN and iron-sulfur (Fe-S) centers, to quinones in the respiratory chain. The immediate electron acceptor for the enzyme in this species is believed to be a menaquinone. Couples the redox reaction to proton translocation (for every two electrons transferred, four hydrogen ions are translocated across the cytoplasmic membrane), and thus conserves the redox energy in a proton gradient. This chain is NADH-quinone oxidoreductase subunit K, found in Bacillus anthracis (strain A0248).